A 393-amino-acid polypeptide reads, in one-letter code: CCA-adding enzyme (393 aa).

ATP contacts are provided by Gly27 and Arg30. CTP-binding residues include Gly27 and Arg30. Mg(2+)-binding residues include Asp40 and Asp42. Positions 111, 154, 157, 160, and 163 each coordinate ATP. CTP-binding residues include Arg111, Asp154, Arg157, Arg160, and Arg163.

It belongs to the tRNA nucleotidyltransferase/poly(A) polymerase family. Bacterial CCA-adding enzyme type 3 subfamily. As to quaternary structure, homodimer. It depends on Mg(2+) as a cofactor.

The enzyme catalyses a tRNA precursor + 2 CTP + ATP = a tRNA with a 3' CCA end + 3 diphosphate. It carries out the reaction a tRNA with a 3' CCA end + 2 CTP + ATP = a tRNA with a 3' CCACCA end + 3 diphosphate. Catalyzes the addition and repair of the essential 3'-terminal CCA sequence in tRNAs without using a nucleic acid template. Adds these three nucleotides in the order of C, C, and A to the tRNA nucleotide-73, using CTP and ATP as substrates and producing inorganic pyrophosphate. tRNA 3'-terminal CCA addition is required both for tRNA processing and repair. Also involved in tRNA surveillance by mediating tandem CCA addition to generate a CCACCA at the 3' terminus of unstable tRNAs. While stable tRNAs receive only 3'-terminal CCA, unstable tRNAs are marked with CCACCA and rapidly degraded. This is CCA-adding enzyme from Listeria innocua serovar 6a (strain ATCC BAA-680 / CLIP 11262).